A 347-amino-acid polypeptide reads, in one-letter code: Membrane progestin receptor gamma-B (347 aa).

The Cytoplasmic portion of the chain corresponds to 1–52 (MLSLIKLQRVFNVHQVPKAFHEDGIISGYRHPRSSATECVWSLFQLTNETLN). The helical transmembrane segment at 53–73 (VWTHFLPTWYFLWKLMTVLLM) threads the bilayer. Residues 74–81 (EDVWNEAY) lie on the Extracellular side of the membrane. The chain crosses the membrane as a helical span at residues 82–102 (TWPLLVFLFSCCVYPLASSCA). The Cytoplasmic portion of the chain corresponds to 103-114 (HTFSSMSTRARH). The helical transmembrane segment at 115-135 (ICYFFDYGALSFYSLGSAISY) threads the bilayer. The Extracellular portion of the chain corresponds to 136–138 (SAY). The helical transmembrane segment at 139–159 (VFPDAWLSSSFHAYYISVAVF) threads the bilayer. Over 160–201 (NTVLSTSLACYSRLGLPLLHYSHDIVERFSERQCPRMSKVLR) the chain is Cytoplasmic. The chain crosses the membrane as a helical span at residues 202–222 (ILAFAYPYLFDNIPLFYRLFV). Topologically, residues 223–235 (CVGEGCTDNEANS) are extracellular. A helical membrane pass occupies residues 236-256 (VHVQHTLLAFLTSFLFATHLP). Topologically, residues 257–314 (ERLAPGRFDYIGHSHQLFHVCAIIGTHFQMKAIEMDMGLRRSQLLASAPAISFNNTIG) are cytoplasmic. Residues 315 to 335 (AALLCVSVSLGIICVYSLPLL) form a helical membrane-spanning segment. Residues 336-347 (YSSNPKNTANKE) lie on the Extracellular side of the membrane.

The protein belongs to the ADIPOR family.

The protein localises to the membrane. In terms of biological role, steroid membrane receptor. Binds progesterone. May be involved in oocyte maturation. In Danio rerio (Zebrafish), this protein is Membrane progestin receptor gamma-B.